Consider the following 492-residue polypeptide: Glutamyl-tRNA(Gln) amidotransferase subunit A (492 aa).

Residues Lys-79 and Ser-154 each act as charge relay system in the active site. Ser-178 (acyl-ester intermediate) is an active-site residue.

This sequence belongs to the amidase family. GatA subfamily. Heterotrimer of A, B and C subunits.

The catalysed reaction is L-glutamyl-tRNA(Gln) + L-glutamine + ATP + H2O = L-glutaminyl-tRNA(Gln) + L-glutamate + ADP + phosphate + H(+). Its function is as follows. Allows the formation of correctly charged Gln-tRNA(Gln) through the transamidation of misacylated Glu-tRNA(Gln) in organisms which lack glutaminyl-tRNA synthetase. The reaction takes place in the presence of glutamine and ATP through an activated gamma-phospho-Glu-tRNA(Gln). The polypeptide is Glutamyl-tRNA(Gln) amidotransferase subunit A (Acinetobacter baumannii (strain ACICU)).